The sequence spans 123 residues: MARIAGVNIPTNKRIVIALTYIYGIGLSLANRICEGCNIDHNVRVVNLSDDEIIRIRNFIRENYIVEGDLRKEVSMNIKFLTDIGCYRGLRHRRGLPVRGQRTHTNAKTRKGRSKLPVAAKKK.

The tract at residues 97–123 is disordered; that stretch reads PVRGQRTHTNAKTRKGRSKLPVAAKKK.

Belongs to the universal ribosomal protein uS13 family. As to quaternary structure, part of the 30S ribosomal subunit. Forms a loose heterodimer with protein S19. Forms two bridges to the 50S subunit in the 70S ribosome.

Located at the top of the head of the 30S subunit, it contacts several helices of the 16S rRNA. In the 70S ribosome it contacts the 23S rRNA (bridge B1a) and protein L5 of the 50S subunit (bridge B1b), connecting the 2 subunits; these bridges are implicated in subunit movement. Contacts the tRNAs in the A and P-sites. This is Small ribosomal subunit protein uS13 from Ehrlichia chaffeensis (strain ATCC CRL-10679 / Arkansas).